Here is a 471-residue protein sequence, read N- to C-terminus: MSREMGELTQTRLQKIWIPHSSSSSVLQRRRGSSIPQFTNSPTMVIMVGLPARGKTYISTKLTRYLNWIGTPTKVFNLGQYRREAVSYRNYEFFRPDNTEAQLIRKQCALAALKDVHKYLSREEGHVAVFDATNTTRERRSLILQFAKEHGYKVFFIESICNDPEIIAENIKQVKLGSPDYIDCDQEKVLEDFLKRIECYEINYQPLDEELDSHLSYIKIFDVGTRYMVNRVQDHVQSRTAYYLMNIHVTPRSIYLCRHGESELNLRGRIGGDSGLSARGKQYAYALANFIRSQGISSLKVWTSHMKRTIQTAEALGVPYEQWKALNEIDAGVCEEMTYEEIQEHYPEEFALRDQDKYRYRYPKGESYEDLVQRLEPVIMELERQENVLVICHQAVMRCLLAYFLDKSSDELPYLKCPLHTVLKLTPVAYGCRVESIYLNVEAVNTHRDKPENVDITREAEEALDTVPAHY.

Serine 2 carries the post-translational modification N-acetylserine. The interval 2-250 (SREMGELTQT…AYYLMNIHVT (249 aa)) is 6-phosphofructo-2-kinase. A Phosphoserine; by PKA modification is found at serine 33. 49-57 (GLPARGKTY) contributes to the ATP binding site. 2 residues coordinate beta-D-fructose 6-phosphate: arginine 82 and arginine 105. The active site involves aspartate 131. Beta-D-fructose 6-phosphate is bound by residues threonine 133 and arginine 139. The residue at position 141 (serine 141) is a Phosphoserine. Cysteine 161 is an active-site residue. 170-175 (NIKQVK) provides a ligand contact to ATP. The beta-D-fructose 6-phosphate site is built by lysine 175, arginine 196, and tyrosine 200. The fructose-2,6-bisphosphatase stretch occupies residues 251 to 471 (PRSIYLCRHG…EALDTVPAHY (221 aa)). A beta-D-fructose 2,6-bisphosphate-binding site is contributed by arginine 258. Histidine 259 serves as the catalytic Tele-phosphohistidine intermediate. Beta-D-fructose 2,6-bisphosphate is bound by residues asparagine 265, glycine 271, and arginine 308. Glutamate 328 functions as the Proton donor/acceptor in the catalytic mechanism. The beta-D-fructose 2,6-bisphosphate site is built by tyrosine 339, arginine 353, lysine 357, tyrosine 368, glutamine 394, and arginine 398. 350-353 (FALR) contacts ATP. Residues 394–398 (QAVMR) and tyrosine 430 contribute to the ATP site.

In the C-terminal section; belongs to the phosphoglycerate mutase family. Homodimer. In terms of tissue distribution, liver.

The enzyme catalyses beta-D-fructose 2,6-bisphosphate + H2O = beta-D-fructose 6-phosphate + phosphate. It carries out the reaction beta-D-fructose 6-phosphate + ATP = beta-D-fructose 2,6-bisphosphate + ADP + H(+). With respect to regulation, phosphorylation at Ser-33 inhibits the kinase and activates the bisphosphatase. In terms of biological role, synthesis and degradation of fructose 2,6-bisphosphate. This is 6-phosphofructo-2-kinase/fructose-2,6-bisphosphatase 1 from Rattus norvegicus (Rat).